The chain runs to 136 residues: Large-conductance mechanosensitive channel (136 aa).

A run of 2 helical transmembrane segments spans residues 9-29 and 79-99; these read AFASRGNVIDMAVGIIIGAAF and IQTVIDFTIIAFAIFMGLKAI.

Belongs to the MscL family. As to quaternary structure, homopentamer.

It is found in the cell inner membrane. Functionally, channel that opens in response to stretch forces in the membrane lipid bilayer. May participate in the regulation of osmotic pressure changes within the cell. The polypeptide is Large-conductance mechanosensitive channel (Shewanella sp. (strain W3-18-1)).